We begin with the raw amino-acid sequence, 460 residues long: Adenylosuccinate lyase (460 aa).

Residues 15-16 (RY), 88-90 (NHD), and 120-121 (TS) contribute to the N(6)-(1,2-dicarboxyethyl)-AMP site. Histidine 169 serves as the catalytic Proton donor/acceptor. N(6)-(1,2-dicarboxyethyl)-AMP is bound at residue glutamine 245. Serine 293 acts as the Proton donor/acceptor in catalysis. N(6)-(1,2-dicarboxyethyl)-AMP is bound by residues serine 294, 299–301 (KIN), asparagine 307, arginine 333, and 338–342 (STVLR).

It belongs to the lyase 1 family. Adenylosuccinate lyase subfamily. In terms of assembly, homotetramer. Residues from neighboring subunits contribute catalytic and substrate-binding residues to each active site.

It carries out the reaction N(6)-(1,2-dicarboxyethyl)-AMP = fumarate + AMP. The enzyme catalyses (2S)-2-[5-amino-1-(5-phospho-beta-D-ribosyl)imidazole-4-carboxamido]succinate = 5-amino-1-(5-phospho-beta-D-ribosyl)imidazole-4-carboxamide + fumarate. Its pathway is purine metabolism; AMP biosynthesis via de novo pathway; AMP from IMP: step 2/2. The protein operates within purine metabolism; IMP biosynthesis via de novo pathway; 5-amino-1-(5-phospho-D-ribosyl)imidazole-4-carboxamide from 5-amino-1-(5-phospho-D-ribosyl)imidazole-4-carboxylate: step 2/2. Functionally, catalyzes two reactions in de novo purine nucleotide biosynthesis. Catalyzes the breakdown of 5-aminoimidazole- (N-succinylocarboxamide) ribotide (SAICAR or 2-[5-amino-1-(5-phospho-beta-D-ribosyl)imidazole-4-carboxamido]succinate) to 5-aminoimidazole-4-carboxamide ribotide (AICAR or 5-amino-1-(5-phospho-beta-D-ribosyl)imidazole-4-carboxamide) and fumarate, and of adenylosuccinate (ADS or N(6)-(1,2-dicarboxyethyl)-AMP) to adenosine monophosphate (AMP) and fumarate. The protein is Adenylosuccinate lyase (purB) of Buchnera aphidicola subsp. Baizongia pistaciae (strain Bp).